The following is a 509-amino-acid chain: Maturase K (509 aa).

The protein belongs to the intron maturase 2 family. MatK subfamily.

The protein localises to the plastid. The protein resides in the chloroplast. In terms of biological role, usually encoded in the trnK tRNA gene intron. Probably assists in splicing its own and other chloroplast group II introns. This chain is Maturase K, found in Nicotiana paniculata.